The chain runs to 425 residues: Glucose-1-phosphate adenylyltransferase (425 aa).

Residues Tyr-114, Gly-179, 194–195, and Ser-212 each bind alpha-D-glucose 1-phosphate; that span reads EK.

It belongs to the bacterial/plant glucose-1-phosphate adenylyltransferase family. Homotetramer.

The enzyme catalyses alpha-D-glucose 1-phosphate + ATP + H(+) = ADP-alpha-D-glucose + diphosphate. Its pathway is glycan biosynthesis; glycogen biosynthesis. Involved in the biosynthesis of ADP-glucose, a building block required for the elongation reactions to produce glycogen. Catalyzes the reaction between ATP and alpha-D-glucose 1-phosphate (G1P) to produce pyrophosphate and ADP-Glc. This Pectobacterium carotovorum subsp. carotovorum (strain PC1) protein is Glucose-1-phosphate adenylyltransferase.